The sequence spans 310 residues: N-acetyl-gamma-glutamyl-phosphate reductase (310 aa).

The active site involves cysteine 117.

It belongs to the NAGSA dehydrogenase family. Type 2 subfamily.

The protein resides in the cytoplasm. The enzyme catalyses N-acetyl-L-glutamate 5-semialdehyde + phosphate + NADP(+) = N-acetyl-L-glutamyl 5-phosphate + NADPH + H(+). The protein operates within amino-acid biosynthesis; L-arginine biosynthesis; N(2)-acetyl-L-ornithine from L-glutamate: step 3/4. Its function is as follows. Catalyzes the NADPH-dependent reduction of N-acetyl-5-glutamyl phosphate to yield N-acetyl-L-glutamate 5-semialdehyde. This Allorhizobium ampelinum (strain ATCC BAA-846 / DSM 112012 / S4) (Agrobacterium vitis (strain S4)) protein is N-acetyl-gamma-glutamyl-phosphate reductase.